The sequence spans 226 residues: Thymocyte nuclear protein 1 (226 aa).

The tract at residues 1-38 (MPRPRKRQTGTAGPDRKKLSGKRTKTENSESTSVKLEN) is disordered. The Nuclear localization signal motif lies at 5 to 10 (RKRQTG). Basic and acidic residues predominate over residues 14–28 (PDRKKLSGKRTKTEN). A compositionally biased stretch (polar residues) spans 29-38 (SESTSVKLEN).

Post-translationally, phosphorylated. In terms of tissue distribution, expressed in the medulla containing mature thymocytes, but not the cortex having immature thymocytes (at protein level). Abundant expression seen in testis, liver, brain and kidney with lower levels of the expression in thymus, spleen, heart and stomach.

The protein resides in the nucleus. Functionally, specifically binds 5-hydroxymethylcytosine (5hmC), suggesting that it acts as a specific reader of 5hmC. The chain is Thymocyte nuclear protein 1 (Thyn1) from Mus musculus (Mouse).